Consider the following 167-residue polypeptide: NADH-quinone oxidoreductase subunit B (167 aa).

Cysteine 40, cysteine 41, cysteine 105, and cysteine 134 together coordinate [4Fe-4S] cluster.

This sequence belongs to the complex I 20 kDa subunit family. As to quaternary structure, NDH-1 is composed of 14 different subunits. Subunits NuoB, C, D, E, F, and G constitute the peripheral sector of the complex. [4Fe-4S] cluster is required as a cofactor.

Its subcellular location is the cell inner membrane. The catalysed reaction is a quinone + NADH + 5 H(+)(in) = a quinol + NAD(+) + 4 H(+)(out). NDH-1 shuttles electrons from NADH, via FMN and iron-sulfur (Fe-S) centers, to quinones in the respiratory chain. The immediate electron acceptor for the enzyme in this species is believed to be ubiquinone. Couples the redox reaction to proton translocation (for every two electrons transferred, four hydrogen ions are translocated across the cytoplasmic membrane), and thus conserves the redox energy in a proton gradient. In Campylobacter jejuni subsp. jejuni serotype O:6 (strain 81116 / NCTC 11828), this protein is NADH-quinone oxidoreductase subunit B.